A 733-amino-acid chain; its full sequence is Phosphoribosylformylglycinamidine synthase subunit PurL (733 aa).

The active site involves His-44. Residues Tyr-47 and Lys-86 each contribute to the ATP site. Glu-88 is a binding site for Mg(2+). Substrate is bound by residues 89 to 92 (SHNH) and Arg-111. Residue His-90 is the Proton acceptor of the active site. Asp-112 is a binding site for Mg(2+). Substrate is bound at residue Gln-233. A Mg(2+)-binding site is contributed by Asp-261. 305-307 (ESQ) serves as a coordination point for substrate. ATP-binding residues include Asp-492 and Gly-529. Asn-530 is a binding site for Mg(2+). Ser-532 is a binding site for substrate.

This sequence belongs to the FGAMS family. As to quaternary structure, monomer. Part of the FGAM synthase complex composed of 1 PurL, 1 PurQ and 2 PurS subunits.

It is found in the cytoplasm. The enzyme catalyses N(2)-formyl-N(1)-(5-phospho-beta-D-ribosyl)glycinamide + L-glutamine + ATP + H2O = 2-formamido-N(1)-(5-O-phospho-beta-D-ribosyl)acetamidine + L-glutamate + ADP + phosphate + H(+). It participates in purine metabolism; IMP biosynthesis via de novo pathway; 5-amino-1-(5-phospho-D-ribosyl)imidazole from N(2)-formyl-N(1)-(5-phospho-D-ribosyl)glycinamide: step 1/2. Part of the phosphoribosylformylglycinamidine synthase complex involved in the purines biosynthetic pathway. Catalyzes the ATP-dependent conversion of formylglycinamide ribonucleotide (FGAR) and glutamine to yield formylglycinamidine ribonucleotide (FGAM) and glutamate. The FGAM synthase complex is composed of three subunits. PurQ produces an ammonia molecule by converting glutamine to glutamate. PurL transfers the ammonia molecule to FGAR to form FGAM in an ATP-dependent manner. PurS interacts with PurQ and PurL and is thought to assist in the transfer of the ammonia molecule from PurQ to PurL. The polypeptide is Phosphoribosylformylglycinamidine synthase subunit PurL (Thermomicrobium roseum (strain ATCC 27502 / DSM 5159 / P-2)).